The chain runs to 663 residues: Transketolase 2 (663 aa).

Histidine 25 contacts substrate. Residues histidine 65 and 113–115 (GPL) contribute to the thiamine diphosphate site. Mg(2+) is bound at residue aspartate 154. Thiamine diphosphate is bound by residues glycine 155 and asparagine 184. Mg(2+) contacts are provided by asparagine 184 and isoleucine 186. Residues histidine 259, arginine 356, and serine 383 each coordinate substrate. A thiamine diphosphate-binding site is contributed by histidine 259. Catalysis depends on glutamate 410, which acts as the Proton donor. Phenylalanine 436 is a binding site for thiamine diphosphate. Residues histidine 460, aspartate 468, and arginine 519 each coordinate substrate.

It belongs to the transketolase family. In terms of assembly, homodimer. The cofactor is Mg(2+). Requires Ca(2+) as cofactor. Mn(2+) is required as a cofactor. Co(2+) serves as cofactor. It depends on thiamine diphosphate as a cofactor.

It carries out the reaction D-sedoheptulose 7-phosphate + D-glyceraldehyde 3-phosphate = aldehydo-D-ribose 5-phosphate + D-xylulose 5-phosphate. In terms of biological role, catalyzes the transfer of a two-carbon ketol group from a ketose donor to an aldose acceptor, via a covalent intermediate with the cofactor thiamine pyrophosphate. The polypeptide is Transketolase 2 (tkt2) (Vibrio vulnificus (strain CMCP6)).